A 198-amino-acid chain; its full sequence is Thymidine kinase (198 aa).

Residues 9–16 and 87–90 each bind ATP; these read STMNAGKS and DEAQ. E88 acts as the Proton acceptor in catalysis. Zn(2+) contacts are provided by C145, C147, C182, and H185.

The protein belongs to the thymidine kinase family. Homotetramer.

It is found in the cytoplasm. It catalyses the reaction thymidine + ATP = dTMP + ADP + H(+). The sequence is that of Thymidine kinase from Ruegeria pomeroyi (strain ATCC 700808 / DSM 15171 / DSS-3) (Silicibacter pomeroyi).